The sequence spans 256 residues: Fructose-1,6-bisphosphatase/inositol-1-monophosphatase (256 aa).

Residues glutamate 65, aspartate 79, isoleucine 81, and aspartate 82 each contribute to the Mg(2+) site. Residues 82–84 (DGT), arginine 172, alanine 177, and arginine 196 contribute to the substrate site. A Mg(2+)-binding site is contributed by aspartate 201.

Belongs to the inositol monophosphatase superfamily. FBPase class 4 family. Homotetramer. Requires Mg(2+) as cofactor.

It catalyses the reaction beta-D-fructose 1,6-bisphosphate + H2O = beta-D-fructose 6-phosphate + phosphate. It carries out the reaction a myo-inositol phosphate + H2O = myo-inositol + phosphate. With respect to regulation, in contrast to mammalian I-1-P phosphatases, is only weakly inhibited by Li(+), since 50% inhibitory concentration for Li(+) is about 100 mM, and the Li(+) concentration required to totally abolish I-1-Pase activity is 1 M. Its function is as follows. Phosphatase with broad specificity; it can dephosphorylate fructose 1,6-bisphosphate, both D and L isomers of inositol-1-phosphate (I-1-P) but displaying a 20-fold higher rate of hydrolysis of D-I-1-P than of the L isomer, 2'-AMP, pNPP, inositol-2-phosphate, beta-glycerol phosphate, and alpha-D-glucose-1-phosphate. Cannot hydrolyze glucose-6-phosphate, fructose-6-phosphate, 5'-AMP and NAD(+). May be involved in the biosynthesis of a unique osmolyte, di-myo-inositol 1,1-phosphate. This Thermotoga maritima (strain ATCC 43589 / DSM 3109 / JCM 10099 / NBRC 100826 / MSB8) protein is Fructose-1,6-bisphosphatase/inositol-1-monophosphatase (suhB).